Here is a 200-residue protein sequence, read N- to C-terminus: Dephospho-CoA kinase (200 aa).

Positions 6–200 constitute a DPCK domain; the sequence is AIALSGGIAT…KIKAKYLEKK (195 aa). Residue 14–19 coordinates ATP; sequence ATGKST.

It belongs to the CoaE family.

The protein localises to the cytoplasm. It catalyses the reaction 3'-dephospho-CoA + ATP = ADP + CoA + H(+). It functions in the pathway cofactor biosynthesis; coenzyme A biosynthesis; CoA from (R)-pantothenate: step 5/5. Catalyzes the phosphorylation of the 3'-hydroxyl group of dephosphocoenzyme A to form coenzyme A. This is Dephospho-CoA kinase from Sulfurimonas denitrificans (strain ATCC 33889 / DSM 1251) (Thiomicrospira denitrificans (strain ATCC 33889 / DSM 1251)).